A 145-amino-acid chain; its full sequence is Large ribosomal subunit protein uL14m (145 aa).

The N-terminal 30 residues, 1–30 (MAVLTGLFGFFAYVRGAVSQRCFSTSGSLS), are a transit peptide targeting the mitochondrion.

It belongs to the universal ribosomal protein uL14 family. As to quaternary structure, component of the mitochondrial ribosome large subunit (39S) which comprises a 16S rRNA and about 50 distinct proteins. Interacts with MALSU1.

The protein resides in the mitochondrion. Functionally, may form part of 2 intersubunit bridges in the assembled ribosome. Upon binding to MALSU1, intersubunit bridge formation is blocked, preventing ribosome formation and repressing translation. The polypeptide is Large ribosomal subunit protein uL14m (Mrpl14) (Rattus norvegicus (Rat)).